Reading from the N-terminus, the 586-residue chain is MSTPAKPTSVESYKRLLSYAFKYKAYFIISFIGFGVFAAMEAQLINILEYFVDRLEGRPSAPVLGLSADVTSSLWFVPISVVVLSIIRGIGAYFGNFYMSLVGLNVITNLRRQIFSQMIYLPQSFYDTKNSGELISLLVYNIEQVTGSVTNAVKTLFRDGMSVAWFLAMMLIINWKLTLAFICVAPVLGGLMYIASKYFRKVSHKIQSAVGRVSHVATESIQGIKLVKSYGGEKYELDRFNDATNQNLHYGTKFERVSAFQTPVLHIVLALALAVTFYLIMILWDSDSSKAVVYATYAAAIAKPFRQLTKINSIIQKGLAAADTIFEVLDLQAEPNSGQQKLNAPKGRVELKDVHFGYNQDTPALNGISFAIEPGQTVALVGSSGSGKSTIVSLLLRFYDNQQGSITIDGTPIQSLELHNLREHIALVNQQTILFNDTIAANIAYGSEHIDEARIQDAAKQANAHDFIMALPNGYQTPAGEDGSRLSGGQRQRIAIARALYKNAPILILDEATSALDNESEKQIQSALDELKQGRTTLVIAHRLSTIENADTILVMDNGRIVEAGNHQTLLDRSGVYANLYHSQFS.

4 helical membrane-spanning segments follow: residues Ala25–Ile45, Leu74–Phe94, Val163–Cys183, and Val264–Trp284. An ABC transmembrane type-1 domain is found at Ile28–Lys317. Residues Val349–Ser583 enclose the ABC transporter domain. Gly382 to Ser389 is an ATP binding site.

This sequence belongs to the ABC transporter superfamily. Lipid exporter (TC 3.A.1.106) family. In terms of assembly, homodimer.

It is found in the cell inner membrane. It carries out the reaction ATP + H2O + lipid A-core oligosaccharideSide 1 = ADP + phosphate + lipid A-core oligosaccharideSide 2.. Functionally, involved in lipopolysaccharide (LPS) biosynthesis. Translocates lipid A-core from the inner to the outer leaflet of the inner membrane. Transmembrane domains (TMD) form a pore in the inner membrane and the ATP-binding domain (NBD) is responsible for energy generation. This is ATP-dependent lipid A-core flippase from Saccharophagus degradans (strain 2-40 / ATCC 43961 / DSM 17024).